The chain runs to 111 residues: Putative carnobacteriocin-B2 immunity protein (111 aa).

Its function is as follows. Could impart immunity to carnobacteriocin-B2 to naturally sensitive host strains. The chain is Putative carnobacteriocin-B2 immunity protein from Carnobacterium maltaromaticum (Carnobacterium piscicola).